Consider the following 258-residue polypeptide: Uroplakin-1a (258 aa).

At 1–14 (MASAAAATTEKGSP) the chain is on the cytoplasmic side. The helical transmembrane segment at 15-35 (VVVGLLVMGNIIILLSGLALF) threads the bilayer. Over 36-59 (AETVWVTADQYRIYPLMGVSGKDD) the chain is Extracellular. Residues 60-86 (VFAGAWIAIFCGFSFFVVASFGVGAAL) form a helical membrane-spanning segment. The Cytoplasmic segment spans residues 87-91 (CRRRS). The chain crosses the membrane as a helical span at residues 92 to 112 (MILTYLILMLIIYIFECASCI). Topologically, residues 113–230 (TSYTHRDYMV…HIGHAIDSYT (118 aa)) are extracellular. Asn170 carries N-linked (GlcNAc...) asparagine glycosylation. Residues 231-252 (WGISWFGFAILMWTLPVMLIAM) traverse the membrane as a helical segment. Over 253–258 (YFYTTL) the chain is Cytoplasmic.

The protein belongs to the tetraspanin (TM4SF) family. In terms of assembly, homodimer; disulfide-linked. Interacts with uroplakin-2 (UPK2). The N-terminus is blocked. Post-translationally, N-glycosylated with high-mannose oligosaccharides. Bladder epithelium.

The protein resides in the membrane. Its function is as follows. Component of the asymmetric unit membrane (AUM); a highly specialized biomembrane elaborated by terminally differentiated urothelial cells. May play an important role in normal bladder epithelial physiology, possibly in regulating membrane permeability of superficial umbrella cells or in stabilizing the apical membrane through AUM/cytoskeletal interactions. This is Uroplakin-1a (UPK1A) from Bos taurus (Bovine).